Consider the following 153-residue polypeptide: Probable ubiquitin-conjugating enzyme E2 C (153 aa).

One can recognise a UBC core domain in the interval 6–153 (SVSKRLQSEL…KRYQEATSRP (148 aa)). Cys90 functions as the Glycyl thioester intermediate in the catalytic mechanism.

The protein belongs to the ubiquitin-conjugating enzyme family. In terms of assembly, component of the APC/C complex. Autoubiquitinated by the APC/C complex, leading to its degradation by the proteasome.

It catalyses the reaction S-ubiquitinyl-[E1 ubiquitin-activating enzyme]-L-cysteine + [E2 ubiquitin-conjugating enzyme]-L-cysteine = [E1 ubiquitin-activating enzyme]-L-cysteine + S-ubiquitinyl-[E2 ubiquitin-conjugating enzyme]-L-cysteine.. Its pathway is protein modification; protein ubiquitination. Its function is as follows. Catalyzes the covalent attachment of ubiquitin to other proteins. Acts as an essential factor of the anaphase promoting complex/cyclosome (APC/C), a cell cycle-regulated ubiquitin ligase that controls progression through mitosis. Acts by initiating polyubiquitin chains on APC/C substrates, leading to the degradation of APC/C substrates by the proteasome and promoting mitotic exit. The protein is Probable ubiquitin-conjugating enzyme E2 C (ube2c) of Dictyostelium discoideum (Social amoeba).